The chain runs to 391 residues: MVANYASMMYHNGSNILGYGVLRLLQYNEQLMSGWESTMKDDIGYWRRFVHDFYTEKGTFRYNIDYKDSPNQEPKLFELSYAALPRFLYLSYCGKLKKMSFLLGNTKEFAIPNNGYFVESSRASILYQYQGGVQVIVSGHLRAHFFRAPLLKLDSLEFSAVGHSEYLLRELMTNASLALSQSRPPQNQIQHDGVKSEDPSSESVNINSSSSLLPDSPVNEYGLEPHIMRFMEITETISGMRDLIAFTLAQRSGPTSALHKFATALQQQHQMQKSTSSNIPYANPAPSGFNGSPRNGDVASLASNYRYAKQPPTMPANAISQANRLLDQNNIPNMDPSILPQSMPIASVPPYSLQGIKRQGTHSPMVEGENPNNNPNFYSSDMLNAQKRTKV.

Positions 180–190 (SQSRPPQNQIQ) are enriched in polar residues. Disordered stretches follow at residues 180 to 217 (SQSR…PDSP) and 366 to 391 (VEGE…RTKV). A compositionally biased stretch (low complexity) spans 201–211 (SESVNINSSSS). A compositionally biased stretch (polar residues) spans 370–383 (NPNNNPNFYSSDML).

The protein belongs to the adn1/SEU family.

It localises to the nucleus. Its function is as follows. Probable transcriptional regulator involved in cell adhesion. The sequence is that of Adhesion defective protein 1 (adn1) from Schizosaccharomyces pombe (strain 972 / ATCC 24843) (Fission yeast).